The sequence spans 87 residues: Putative defensin-like protein 238 (87 aa).

The signal sequence occupies residues 1 to 23 (MRSITWFIVFCVFMFIALNHVKG). Cystine bridges form between Cys-30–Cys-87, Cys-40–Cys-65, Cys-48–Cys-78, and Cys-63–Cys-80.

It belongs to the DEFL family.

Its subcellular location is the secreted. This is Putative defensin-like protein 238 (SCRL16) from Arabidopsis thaliana (Mouse-ear cress).